The following is a 310-amino-acid chain: L-lactate dehydrogenase (310 aa).

NAD(+)-binding positions include 10–11 (MV), aspartate 32, tyrosine 62, and 76–77 (GV). Residues glutamine 79, arginine 85, and 117–120 (NPVD) each bind substrate. Residues 115 to 117 (ATN) and serine 140 contribute to the NAD(+) site. Substrate is bound at residue 145–148 (DTAR). Beta-D-fructose 1,6-bisphosphate contacts are provided by arginine 150 and histidine 165. Residue histidine 172 is the Proton acceptor of the active site. The residue at position 218 (tyrosine 218) is a Phosphotyrosine. Position 227 (threonine 227) interacts with substrate.

Belongs to the LDH/MDH superfamily. LDH family. As to quaternary structure, homotetramer.

The protein localises to the cytoplasm. The catalysed reaction is (S)-lactate + NAD(+) = pyruvate + NADH + H(+). Its pathway is fermentation; pyruvate fermentation to lactate; (S)-lactate from pyruvate: step 1/1. Its activity is regulated as follows. Allosterically activated by fructose 1,6-bisphosphate (FBP). Its function is as follows. Catalyzes the conversion of lactate to pyruvate. The sequence is that of L-lactate dehydrogenase from Thermus thermophilus (strain ATCC 27634 / DSM 579 / HB8).